The primary structure comprises 95 residues: Protein FAM240C (95 aa).

The segment at 68–95 (KMLQGPGRCPDRVPEATESLHTKDKKAA) is disordered. Residues 76–95 (CPDRVPEATESLHTKDKKAA) are compositionally biased toward basic and acidic residues.

This sequence belongs to the FAM240 family.

The sequence is that of Protein FAM240C (FAM240C) from Homo sapiens (Human).